A 292-amino-acid polypeptide reads, in one-letter code: Elongation factor Ts (292 aa).

The involved in Mg(2+) ion dislocation from EF-Tu stretch occupies residues 79 to 82 (TDFV).

The protein belongs to the EF-Ts family.

It localises to the cytoplasm. In terms of biological role, associates with the EF-Tu.GDP complex and induces the exchange of GDP to GTP. It remains bound to the aminoacyl-tRNA.EF-Tu.GTP complex up to the GTP hydrolysis stage on the ribosome. In Mycoplasmoides gallisepticum (strain R(low / passage 15 / clone 2)) (Mycoplasma gallisepticum), this protein is Elongation factor Ts.